An 89-amino-acid chain; its full sequence is Small ribosomal subunit protein uS15 (89 aa).

This sequence belongs to the universal ribosomal protein uS15 family. Part of the 30S ribosomal subunit. Forms a bridge to the 50S subunit in the 70S ribosome, contacting the 23S rRNA.

Functionally, one of the primary rRNA binding proteins, it binds directly to 16S rRNA where it helps nucleate assembly of the platform of the 30S subunit by binding and bridging several RNA helices of the 16S rRNA. Its function is as follows. Forms an intersubunit bridge (bridge B4) with the 23S rRNA of the 50S subunit in the ribosome. This Corynebacterium glutamicum (strain R) protein is Small ribosomal subunit protein uS15.